A 352-amino-acid chain; its full sequence is MEKLRVGLVFGGCSGEHEVSITSAKAVCGALQTAPNPDKYEVIPFYIHKNGCWQAGEVANQVLEMGKPQDQAEEGSRWHFPEAAASIDVWFPILHGPNGEDGTIQGLLQLMQVPYVGSGVLGSAAGMDKIAMKTVFAAAGLPQVKYESVTREQVWSDPCVFKQVCDRIDETIGYPNFVKPANLGSSVGISKVRSRLELEAALDSAASFDRRIVVEAGVVAREVECAVLGNGRPRASVVGEISFDSDFYDYETKYTEGRASLQIPAPLPADITEKIQEMAINAFIAVDAAGLSRVDFFYVESTGEVLINEINTLPGFTSTSMYPMLWSVSGVDFPKLVDRLIQLAVEYHAPAD.

The 210-residue stretch at 133–342 (KTVFAAAGLP…FPKLVDRLIQ (210 aa)) folds into the ATP-grasp domain. 169–224 (DETIGYPNFVKPANLGSSVGISKVRSRLELEAALDSAASFDRRIVVEAGVVAREVE) lines the ATP pocket. D295, E309, and N311 together coordinate Mg(2+).

It belongs to the D-alanine--D-alanine ligase family. Requires Mg(2+) as cofactor. It depends on Mn(2+) as a cofactor.

It localises to the cytoplasm. It catalyses the reaction 2 D-alanine + ATP = D-alanyl-D-alanine + ADP + phosphate + H(+). Its pathway is cell wall biogenesis; peptidoglycan biosynthesis. Functionally, cell wall formation. The polypeptide is D-alanine--D-alanine ligase (Acaryochloris marina (strain MBIC 11017)).